Here is a 141-residue protein sequence, read N- to C-terminus: Large ribosomal subunit protein uL11 (141 aa).

It belongs to the universal ribosomal protein uL11 family. As to quaternary structure, part of the ribosomal stalk of the 50S ribosomal subunit. Interacts with L10 and the large rRNA to form the base of the stalk. L10 forms an elongated spine to which L12 dimers bind in a sequential fashion forming a multimeric L10(L12)X complex. One or more lysine residues are methylated.

Its function is as follows. Forms part of the ribosomal stalk which helps the ribosome interact with GTP-bound translation factors. This is Large ribosomal subunit protein uL11 from Limosilactobacillus fermentum (strain NBRC 3956 / LMG 18251) (Lactobacillus fermentum).